A 207-amino-acid chain; its full sequence is MPTAAVFNIEGQQVGEIELSEAVFGQPVNDAVLHEVVVMQLANRRQGTHDTKTRSEVRGGGRKPWRQKGTGRARHGTIRSPIWRGGGIVFGPHPRDYSYRVPKKVKRLALKSALATKVDAGRILVLDALELPGPKTKEMARILANLKAGEGALVVTAERNVNVEKSARNLPGVKSLEARQLNVYDLLNHPHLIITRDAVARVEEVLA.

Residues 44–77 (RRQGTHDTKTRSEVRGGGRKPWRQKGTGRARHGT) form a disordered region. Residues 47 to 59 (GTHDTKTRSEVRG) are compositionally biased toward basic and acidic residues. Residues 60–77 (GGRKPWRQKGTGRARHGT) show a composition bias toward basic residues.

Belongs to the universal ribosomal protein uL4 family. As to quaternary structure, part of the 50S ribosomal subunit.

One of the primary rRNA binding proteins, this protein initially binds near the 5'-end of the 23S rRNA. It is important during the early stages of 50S assembly. It makes multiple contacts with different domains of the 23S rRNA in the assembled 50S subunit and ribosome. In terms of biological role, forms part of the polypeptide exit tunnel. The chain is Large ribosomal subunit protein uL4 from Desulforudis audaxviator (strain MP104C).